The sequence spans 265 residues: 3-methyl-2-oxobutanoate hydroxymethyltransferase (265 aa).

2 residues coordinate Mg(2+): Asp45 and Asp84. Residues Asp45 to Ser46, Asp84, and Lys112 each bind 3-methyl-2-oxobutanoate. Glu114 contributes to the Mg(2+) binding site. The active-site Proton acceptor is the Glu181.

The protein belongs to the PanB family. In terms of assembly, homodecamer; pentamer of dimers. It depends on Mg(2+) as a cofactor.

It is found in the cytoplasm. The catalysed reaction is 3-methyl-2-oxobutanoate + (6R)-5,10-methylene-5,6,7,8-tetrahydrofolate + H2O = 2-dehydropantoate + (6S)-5,6,7,8-tetrahydrofolate. Its pathway is cofactor biosynthesis; (R)-pantothenate biosynthesis; (R)-pantoate from 3-methyl-2-oxobutanoate: step 1/2. Functionally, catalyzes the reversible reaction in which hydroxymethyl group from 5,10-methylenetetrahydrofolate is transferred onto alpha-ketoisovalerate to form ketopantoate. The chain is 3-methyl-2-oxobutanoate hydroxymethyltransferase from Wigglesworthia glossinidia brevipalpis.